A 221-amino-acid chain; its full sequence is N-(5'-phosphoribosyl)anthranilate isomerase (221 aa).

This sequence belongs to the TrpF family.

The catalysed reaction is N-(5-phospho-beta-D-ribosyl)anthranilate = 1-(2-carboxyphenylamino)-1-deoxy-D-ribulose 5-phosphate. It participates in amino-acid biosynthesis; L-tryptophan biosynthesis; L-tryptophan from chorismate: step 3/5. This is N-(5'-phosphoribosyl)anthranilate isomerase from Geobacillus thermodenitrificans (strain NG80-2).